A 254-amino-acid polypeptide reads, in one-letter code: NAD-dependent protein deacylase 2 (254 aa).

A Deacetylase sirtuin-type domain is found at 1–254; that stretch reads MDEHSIMQAV…LPALVRRLGV (254 aa). NAD(+) is bound at residue 24–44; sequence GAGMSADSGLETYRDPETGVW. The substrate site is built by Tyr-69 and Arg-72. 105–108 contributes to the NAD(+) binding site; the sequence is QNID. His-123 (proton acceptor) is an active-site residue. Positions 131, 134, 157, and 160 each coordinate Zn(2+). NAD(+)-binding positions include 197 to 199 and Ala-241; that span reads GTS.

It belongs to the sirtuin family. Class III subfamily. Requires Zn(2+) as cofactor.

The protein localises to the cytoplasm. The enzyme catalyses N(6)-acetyl-L-lysyl-[protein] + NAD(+) + H2O = 2''-O-acetyl-ADP-D-ribose + nicotinamide + L-lysyl-[protein]. The catalysed reaction is N(6)-succinyl-L-lysyl-[protein] + NAD(+) + H2O = 2''-O-succinyl-ADP-D-ribose + nicotinamide + L-lysyl-[protein]. Its function is as follows. NAD-dependent lysine deacetylase and desuccinylase that specifically removes acetyl and succinyl groups on target proteins. Modulates the activities of several proteins which are inactive in their acylated form. The polypeptide is NAD-dependent protein deacylase 2 (Corynebacterium efficiens (strain DSM 44549 / YS-314 / AJ 12310 / JCM 11189 / NBRC 100395)).